The chain runs to 334 residues: Glycerol-3-phosphate dehydrogenase [NAD(P)+] (334 aa).

Trp13, Arg33, and Lys106 together coordinate NADPH. Residues Lys106, Gly137, and Ser139 each contribute to the sn-glycerol 3-phosphate site. Ala141 is an NADPH binding site. Residues Lys192, Asp245, Ser255, Arg256, and Asn257 each coordinate sn-glycerol 3-phosphate. Residue Lys192 is the Proton acceptor of the active site. Arg256 contributes to the NADPH binding site. NADPH contacts are provided by Val280 and Glu282.

It belongs to the NAD-dependent glycerol-3-phosphate dehydrogenase family.

Its subcellular location is the cytoplasm. The enzyme catalyses sn-glycerol 3-phosphate + NAD(+) = dihydroxyacetone phosphate + NADH + H(+). The catalysed reaction is sn-glycerol 3-phosphate + NADP(+) = dihydroxyacetone phosphate + NADPH + H(+). It participates in membrane lipid metabolism; glycerophospholipid metabolism. Its function is as follows. Catalyzes the reduction of the glycolytic intermediate dihydroxyacetone phosphate (DHAP) to sn-glycerol 3-phosphate (G3P), the key precursor for phospholipid synthesis. This is Glycerol-3-phosphate dehydrogenase [NAD(P)+] from Chlamydia muridarum (strain MoPn / Nigg).